The chain runs to 99 residues: Aspartyl/glutamyl-tRNA(Asn/Gln) amidotransferase subunit C (99 aa).

This sequence belongs to the GatC family. As to quaternary structure, heterotrimer of A, B and C subunits.

It carries out the reaction L-glutamyl-tRNA(Gln) + L-glutamine + ATP + H2O = L-glutaminyl-tRNA(Gln) + L-glutamate + ADP + phosphate + H(+). The enzyme catalyses L-aspartyl-tRNA(Asn) + L-glutamine + ATP + H2O = L-asparaginyl-tRNA(Asn) + L-glutamate + ADP + phosphate + 2 H(+). Allows the formation of correctly charged Asn-tRNA(Asn) or Gln-tRNA(Gln) through the transamidation of misacylated Asp-tRNA(Asn) or Glu-tRNA(Gln) in organisms which lack either or both of asparaginyl-tRNA or glutaminyl-tRNA synthetases. The reaction takes place in the presence of glutamine and ATP through an activated phospho-Asp-tRNA(Asn) or phospho-Glu-tRNA(Gln). This chain is Aspartyl/glutamyl-tRNA(Asn/Gln) amidotransferase subunit C, found in Rhodococcus opacus (strain B4).